Here is a 510-residue protein sequence, read N- to C-terminus: Chromosomal replication initiator protein DnaA (510 aa).

Residues 1–107 (MTNDPGSGFA…VRIAPPPADD (107 aa)) are domain I, interacts with DnaA modulators. The domain II stretch occupies residues 107 to 169 (DDDDSVAAAV…ADTSASADGT (63 aa)). The segment at 119-168 (PGLEASPETSQEVSDEIDDFGENAPKSRQSWPTHFKKRSTDADTSASADG) is disordered. A domain III, AAA+ region region spans residues 170–386 (SLNRRYTFDT…GALIRVTAFA (217 aa)). Positions 214, 216, 217, and 218 each coordinate ATP. The segment at 387–510 (SLNKTPIDKA…TTRIRQRSKR (124 aa)) is domain IV, binds dsDNA.

The protein belongs to the DnaA family. As to quaternary structure, oligomerizes as a right-handed, spiral filament on DNA at oriC.

The protein localises to the cytoplasm. Plays an essential role in the initiation and regulation of chromosomal replication. ATP-DnaA binds to the origin of replication (oriC) to initiate formation of the DNA replication initiation complex once per cell cycle. Binds the DnaA box (a 9 base pair repeat at the origin) and separates the double-stranded (ds)DNA. Forms a right-handed helical filament on oriC DNA; dsDNA binds to the exterior of the filament while single-stranded (ss)DNA is stabiized in the filament's interior. The ATP-DnaA-oriC complex binds and stabilizes one strand of the AT-rich DNA unwinding element (DUE), permitting loading of DNA polymerase. After initiation quickly degrades to an ADP-DnaA complex that is not apt for DNA replication. Binds acidic phospholipids. This Mycobacterium ulcerans (strain Agy99) protein is Chromosomal replication initiator protein DnaA.